We begin with the raw amino-acid sequence, 112 residues long: Ribonuclease P protein component (112 aa).

This sequence belongs to the RnpA family. In terms of assembly, consists of a catalytic RNA component (M1 or rnpB) and a protein subunit.

The enzyme catalyses Endonucleolytic cleavage of RNA, removing 5'-extranucleotides from tRNA precursor.. In terms of biological role, RNaseP catalyzes the removal of the 5'-leader sequence from pre-tRNA to produce the mature 5'-terminus. It can also cleave other RNA substrates such as 4.5S RNA. The protein component plays an auxiliary but essential role in vivo by binding to the 5'-leader sequence and broadening the substrate specificity of the ribozyme. The sequence is that of Ribonuclease P protein component from Mesomycoplasma hyopneumoniae (strain 7448) (Mycoplasma hyopneumoniae).